The primary structure comprises 208 residues: NAD(P)H dehydrogenase (quinone) (208 aa).

One can recognise a Flavodoxin-like domain in the interval 4-199 (VNVIFHSIHG…AMARYQGRHV (196 aa)). Residues 10 to 15 (SIHGHT) and 87 to 89 (TRY) each bind FMN. W107 contacts substrate. FMN is bound by residues 122-128 (SSGTQHG) and H143.

Belongs to the WrbA family. It depends on FMN as a cofactor.

It catalyses the reaction a quinone + NADH + H(+) = a quinol + NAD(+). The catalysed reaction is a quinone + NADPH + H(+) = a quinol + NADP(+). The chain is NAD(P)H dehydrogenase (quinone) from Methanosarcina barkeri (strain Fusaro / DSM 804).